A 1103-amino-acid polypeptide reads, in one-letter code: Ubiquitin carboxyl-terminal hydrolase 7 (1103 aa).

Residues 1-11 (MNHQQQQQQQQ) are compositionally biased toward low complexity. Disordered regions lie at residues 1–41 (MNHQ…TQNP) and 46–65 (NVTL…DDTS). The interval 1-209 (MNHQQQQQQQ…APHGVAWDSK (209 aa)) is interaction with TSPYL5. Ser-19 carries the post-translational modification Phosphoserine. A compositionally biased stretch (acidic residues) spans 20–32 (EPEDMEMEAGDTD). Phosphoserine occurs at positions 50 and 54. The segment at 54–209 (SNAEEDMEDD…APHGVAWDSK (156 aa)) is interaction with p53/TP53 and MDM2. One can recognise an MATH domain in the interval 69–196 (EATFQFTVER…DDKVTFEVFV (128 aa)). The tract at residues 71–206 (TFQFTVERFS…QADAPHGVAW (136 aa)) is necessary for nuclear localization. The USP domain maps to 215 to 522 (VGLKNQGATC…NAYMLVYIRE (308 aa)). Residue Cys-224 is the Nucleophile of the active site. Catalysis depends on His-465, which acts as the Proton acceptor. Position 870 is an N6-acetyllysine; alternate (Lys-870). Lys-870 participates in a covalent cross-link: Glycyl lysine isopeptide (Lys-Gly) (interchain with G-Cter in SUMO2); alternate. Residue Lys-870 forms a Glycyl lysine isopeptide (Lys-Gly) (interchain with G-Cter in ubiquitin); alternate linkage. Lys-883 participates in a covalent cross-link: Glycyl lysine isopeptide (Lys-Gly) (interchain with G-Cter in SUMO2). Ser-964 carries the post-translational modification Phosphoserine. N6-acetyllysine is present on residues Lys-1085 and Lys-1097.

Belongs to the peptidase C19 family. As to quaternary structure, monomer. Homodimer. Part of a complex with DAXX, MDM2, RASSF1 and USP7. Part of a complex with DAXX, MDM2 and USP7. Interacts with MDM2; the interaction is independent of p53/TP53. Interacts with DAXX; the interaction is direct and independent of MDM2 and p53/TP53. Component of a complex composed of KMT2E, OGT and USP7; the complex stabilizes KMT2E, preventing KMT2E ubiquitination and proteasomal-mediated degradation. Interacts (via MATH domain) with KMT2E. Interacts with OGT. Interacts with FOXO4; the interaction is enhanced in presence of hydrogen peroxide and occurs independently of p53/TP53. Interacts with p53/TP53; the interaction is enhanced in response to DNA damage; the interaction is impaired by TSPYL5. Interacts with PTEN; the interaction is direct. Interacts with ATXN1 and the strength of interaction is influenced by the length of the poly-Gln region in ATXN1. A weaker interaction seen with mutants having longer poly-Gln regions. Interacts with KIAA1530/UVSSA. Interacts with MEX3C and antagonizes its ability to degrade mRNA. Interacts with DNMT1 and UHRF1. Interacts with FOXP3. Interacts (via MATH domain) with RNF220. Associated component of the Polycomb group (PcG) multiprotein PRC1-like complex. Interacts with EPOP. Interacts with OTUD4 and USP9X; the interaction is direct. Interacts with CRY2. Interacts with REST. Interacts with ERCC6. Part of a complex consisting of USP7, MAGEL2 and TRIM27; directly interacts with MAGEL2; directly interacts with TRIM27. Polyneddylated. Post-translationally, not sumoylated. In terms of processing, polyubiquitinated. Ubiquitinated at Lys-870. In terms of tissue distribution, widely expressed. High expression is detected in brain, bone marrow, thymus and testis.

The protein localises to the nucleus. It is found in the cytoplasm. It localises to the PML body. The protein resides in the chromosome. It carries out the reaction Thiol-dependent hydrolysis of ester, thioester, amide, peptide and isopeptide bonds formed by the C-terminal Gly of ubiquitin (a 76-residue protein attached to proteins as an intracellular targeting signal).. Functionally, hydrolase that deubiquitinates target proteins such as ARMC5, FOXO4, DEPTOR, KAT5, p53/TP53, MDM2, ERCC6, DNMT1, UHRF1, PTEN, KMT2E/MLL5 and DAXX. Together with DAXX, prevents MDM2 self-ubiquitination and enhances the E3 ligase activity of MDM2 towards p53/TP53, thereby promoting p53/TP53 ubiquitination and proteasomal degradation. Deubiquitinates p53/TP53, preventing degradation of p53/TP53, and enhances p53/TP53-dependent transcription regulation, cell growth repression and apoptosis. Deubiquitinates p53/TP53 and MDM2 and strongly stabilizes p53/TP53 even in the presence of excess MDM2, and also induces p53/TP53-dependent cell growth repression and apoptosis. Deubiquitination of FOXO4 in presence of hydrogen peroxide is not dependent on p53/TP53 and inhibits FOXO4-induced transcriptional activity. In association with DAXX, is involved in the deubiquitination and translocation of PTEN from the nucleus to the cytoplasm, both processes that are counteracted by PML. Deubiquitinates KMT2E preventing KMT2E proteasomal-mediated degradation. Involved in cell proliferation during early embryonic development. Involved in transcription-coupled nucleotide excision repair (TC-NER) in response to UV damage: recruited to DNA damage sites following interaction with KIAA1530/UVSSA and promotes deubiquitination of ERCC6, preventing UV-induced degradation of ERCC6. Involved in maintenance of DNA methylation via its interaction with UHRF1 and DNMT1: acts by mediating deubiquitination of UHRF1 and DNMT1, preventing their degradation and promoting DNA methylation by DNMT1. Deubiquitinates alkylation repair enzyme ALKBH3. OTUD4 recruits USP7 and USP9X to stabilize ALKBH3, thereby promoting the repair of alkylated DNA lesions. Acts as a chromatin regulator via its association with the Polycomb group (PcG) multiprotein PRC1-like complex; may act by deubiquitinating components of the PRC1-like complex. Able to mediate deubiquitination of histone H2B; it is however unsure whether this activity takes place in vivo. Exhibits a preference towards 'Lys-48'-linked ubiquitin chains. Increases regulatory T-cells (Treg) suppressive capacity by deubiquitinating and stabilizing the transcription factor FOXP3 which is crucial for Treg cell function. Plays a role in the maintenance of the circadian clock periodicity via deubiquitination and stabilization of the CRY1 and CRY2 proteins. Deubiquitinates REST, thereby stabilizing REST and promoting the maintenance of neural progenitor cells. Deubiquitinates SIRT7, inhibiting SIRT7 histone deacetylase activity and regulating gluconeogenesis. Involved in the regulation of WASH-dependent actin polymerization at the surface of endosomes and the regulation of endosomal protein recycling. It maintains optimal WASH complex activity and precise F-actin levels via deubiquitination of TRIM27 and WASHC1. Mediates the deubiquitination of phosphorylated DEPTOR, promoting its stability and leading to decreased mTORC1 signaling. The chain is Ubiquitin carboxyl-terminal hydrolase 7 (Usp7) from Mus musculus (Mouse).